The chain runs to 218 residues: MDAIVTFFQENGHNLLVQTWQHLFISLSAVILGIAVAVPTGILLTRSPKVANFVIGVVSVLQTVPSLAILAFIIPFLGVGTLPAIIALFIYALLPILRNTFIGVRGVDKNLIESGRGMGMTNWQLIVNVEIPNSISVIMAGIRLSAVYVIAWATLASYIGAGGLGDFIFNGLNLYRPDLILGGAIPVTILALVVEFALGKLEYRLTPKAIREAREGGE.

An ABC transmembrane type-1 domain is found at 19–198 (TWQHLFISLS…ILALVVEFAL (180 aa)). A run of 5 helical transmembrane segments spans residues 23-43 (LFIS…TGIL), 48-68 (PKVA…PSLA), 79-101 (VGTL…RNTF), 149-169 (VIAW…DFIF), and 179-199 (LILG…FALG).

The protein belongs to the binding-protein-dependent transport system permease family. In terms of assembly, the complex is composed of two ATP-binding proteins (OpuCA), two transmembrane proteins (OpuCB and OpuCD) and a solute-binding protein (OpuCC).

The protein resides in the cell membrane. Functionally, part of the ABC transporter complex OpuCABCD involved in carnitine uptake. Probably responsible for the translocation of the substrate across the membrane. Involved, with BetL and GbuABC, in osmoprotection and cryoprotection of Listeria. In Listeria monocytogenes, this protein is Carnitine transport permease protein OpuCB (opuCB).